The sequence spans 393 residues: NAD(P)H-quinone oxidoreductase subunit H, chloroplastic (393 aa).

It belongs to the complex I 49 kDa subunit family. As to quaternary structure, NDH is composed of at least 16 different subunits, 5 of which are encoded in the nucleus.

The protein resides in the plastid. The protein localises to the chloroplast thylakoid membrane. The enzyme catalyses a plastoquinone + NADH + (n+1) H(+)(in) = a plastoquinol + NAD(+) + n H(+)(out). The catalysed reaction is a plastoquinone + NADPH + (n+1) H(+)(in) = a plastoquinol + NADP(+) + n H(+)(out). In terms of biological role, NDH shuttles electrons from NAD(P)H:plastoquinone, via FMN and iron-sulfur (Fe-S) centers, to quinones in the photosynthetic chain and possibly in a chloroplast respiratory chain. The immediate electron acceptor for the enzyme in this species is believed to be plastoquinone. Couples the redox reaction to proton translocation, and thus conserves the redox energy in a proton gradient. This Solanum bulbocastanum (Wild potato) protein is NAD(P)H-quinone oxidoreductase subunit H, chloroplastic.